Consider the following 226-residue polypeptide: Leucyl/phenylalanyl-tRNA--protein transferase (226 aa).

The protein belongs to the L/F-transferase family.

It is found in the cytoplasm. The catalysed reaction is N-terminal L-lysyl-[protein] + L-leucyl-tRNA(Leu) = N-terminal L-leucyl-L-lysyl-[protein] + tRNA(Leu) + H(+). The enzyme catalyses N-terminal L-arginyl-[protein] + L-leucyl-tRNA(Leu) = N-terminal L-leucyl-L-arginyl-[protein] + tRNA(Leu) + H(+). It carries out the reaction L-phenylalanyl-tRNA(Phe) + an N-terminal L-alpha-aminoacyl-[protein] = an N-terminal L-phenylalanyl-L-alpha-aminoacyl-[protein] + tRNA(Phe). Its function is as follows. Functions in the N-end rule pathway of protein degradation where it conjugates Leu, Phe and, less efficiently, Met from aminoacyl-tRNAs to the N-termini of proteins containing an N-terminal arginine or lysine. The chain is Leucyl/phenylalanyl-tRNA--protein transferase from Pseudomonas putida (strain ATCC 47054 / DSM 6125 / CFBP 8728 / NCIMB 11950 / KT2440).